We begin with the raw amino-acid sequence, 205 residues long: MADQSGNAAPPPVRRRSSANYRAYATEPHAKKKSKISASRKLQLKTLMLQIAKQELEREAVERRGEKGRALSTRCQPLELAGLGFEELQDLCRQLHARVDKVDEERYDVEAKVTKNITEIADLNQKIFDLRGKFKRPTLRRVRISADAMMQALLGTRAKETLDLRAHLKQVKKEDTEKENREVGDWRKNIDALSGMEGRKKKFEG.

Positions 1 to 38 (MADQSGNAAPPPVRRRSSANYRAYATEPHAKKKSKISA) are disordered. A2 carries the N-acetylalanine modification. S5 carries the post-translational modification Phosphoserine. 2 positions are modified to phosphoserine; by PKA and PKD/PRKD1: S17 and S18. Y21 carries the phosphotyrosine modification. Phosphothreonine; by STK4/MST1 is present on T26. Positions 27–74 (EPHAKKKSKISASRKLQLKTLMLQIAKQELEREAVERRGEKGRALSTR) are involved in binding TNC. Phosphoserine; by PKC/PRKCE is present on residues S37 and S39. Residue T46 is modified to Phosphothreonine; by STK4/MST1. The residue at position 72 (S72) is a Phosphoserine. The residue at position 73 (T73) is a Phosphothreonine. The interval 124-145 (NQKIFDLRGKFKRPTLRRVRIS) is involved in binding TNC and actin. T138 is subject to Phosphothreonine; by STK4/MST1. S145 carries the post-translational modification Phosphoserine; by PAK3. Phosphothreonine is present on T176. The residue at position 194 (S194) is a Phosphoserine.

This sequence belongs to the troponin I family. Binds to actin and tropomyosin. Interacts with TRIM63. Interacts with STK4/MST1. In terms of processing, phosphorylated at Ser-17 and Ser-18 by PRKD1; phosphorylation reduces myofilament calcium sensitivity. Phosphorylated preferentially at Thr-26. Phosphorylation by STK4/MST1 alters its binding affinity to TNNC1 (cardiac Tn-C) and TNNT2 (cardiac Tn-T). Phosphorylated at Ser-37 and Ser-39 by PRKCE; phosphorylation increases myocardium contractile dysfunction.

In terms of biological role, troponin I is the inhibitory subunit of troponin, the thin filament regulatory complex which confers calcium-sensitivity to striated muscle actomyosin ATPase activity. In Equus caballus (Horse), this protein is Troponin I, cardiac muscle (TNNI3).